The primary structure comprises 215 residues: Myelin protein zero-like protein 2 (215 aa).

An N-terminal signal peptide occupies residues 1–26 (MYGKSSTRAVLLLLGIQLTALWPIAA). In terms of domain architecture, Ig-like V-type spans 27–141 (VEIYTSRVLE…DGVIGEIRLS (115 aa)). Topologically, residues 27 to 154 (VEIYTSRVLE…TVRFSEIHFL (128 aa)) are extracellular. N-linked (GlcNAc...) asparagine glycosylation is found at Asn39 and Asn118. Cys47 and Cys123 are joined by a disulfide. Residues 155–175 (ALAIGSACALMIIIVIVVVLF) traverse the membrane as a helical segment. Over 176 to 215 (QHYRKKRWAERAHKVVEIKSKEEERLNQEKKVSVYLEDTD) the chain is Cytoplasmic.

The protein belongs to the myelin P0 protein family. As to expression, widely expressed. In fetal tissues, highest expression in the inner ear. In adult tissues, highest levels in thymus and lung.

The protein resides in the membrane. Functionally, mediates homophilic cell-cell adhesion. The sequence is that of Myelin protein zero-like protein 2 (MPZL2) from Homo sapiens (Human).